Consider the following 144-residue polypeptide: Large ribosomal subunit protein uL13 (144 aa).

This sequence belongs to the universal ribosomal protein uL13 family. Part of the 50S ribosomal subunit.

Functionally, this protein is one of the early assembly proteins of the 50S ribosomal subunit, although it is not seen to bind rRNA by itself. It is important during the early stages of 50S assembly. This Lachnoclostridium phytofermentans (strain ATCC 700394 / DSM 18823 / ISDg) (Clostridium phytofermentans) protein is Large ribosomal subunit protein uL13.